A 473-amino-acid chain; its full sequence is Asparagine--tRNA ligase (473 aa).

This sequence belongs to the class-II aminoacyl-tRNA synthetase family. As to quaternary structure, homodimer.

Its subcellular location is the cytoplasm. It catalyses the reaction tRNA(Asn) + L-asparagine + ATP = L-asparaginyl-tRNA(Asn) + AMP + diphosphate + H(+). The protein is Asparagine--tRNA ligase of Treponema denticola (strain ATCC 35405 / DSM 14222 / CIP 103919 / JCM 8153 / KCTC 15104).